An 89-amino-acid polypeptide reads, in one-letter code: Small ribosomal subunit protein uS15 (89 aa).

This sequence belongs to the universal ribosomal protein uS15 family. Part of the 30S ribosomal subunit. Forms a bridge to the 50S subunit in the 70S ribosome, contacting the 23S rRNA.

Its function is as follows. One of the primary rRNA binding proteins, it binds directly to 16S rRNA where it helps nucleate assembly of the platform of the 30S subunit by binding and bridging several RNA helices of the 16S rRNA. Forms an intersubunit bridge (bridge B4) with the 23S rRNA of the 50S subunit in the ribosome. This chain is Small ribosomal subunit protein uS15, found in Granulibacter bethesdensis (strain ATCC BAA-1260 / CGDNIH1).